A 1006-amino-acid polypeptide reads, in one-letter code: Collagen alpha-2(I) chain (1006 aa).

Positions Ser-1–Gly-84 are disordered. 4-hydroxyproline occurs at positions 10, 13, 35, and 41. Residues Leu-28–Ala-64 show a composition bias toward low complexity. Residue Lys-86 is modified to 5-hydroxylysine; alternate. O-linked (Gal...) hydroxylysine; alternate glycosylation occurs at Lys-86. Residues Gly-99–Ala-1006 form a disordered region. Low complexity-rich tracts occupy residues Ser-142–Pro-163 and Pro-209–Pro-230. Over residues Gly-264–Gly-273 the composition is skewed to gly residues. Low complexity predominate over residues Ser-274–Ser-284. The span at Gly-306–Gly-315 shows a compositional bias: gly residues. Residues Pro-328–Ser-344 show a composition bias toward low complexity. Pro-350 and Pro-353 each carry 4-hydroxyproline. Residues Leu-379 to Ala-398 show a composition bias toward low complexity. Over residues Gly-447 to Gly-456 the composition is skewed to gly residues. 2 stretches are compositionally biased toward low complexity: residues Pro-503–Pro-520 and Glu-532–Ala-542. Residues Gly-543–Gly-552 show a composition bias toward gly residues. 2 stretches are compositionally biased toward low complexity: residues Ala-585 to Ser-615 and Val-622 to Ala-642. The segment covering Lys-643–Lys-652 has biased composition (basic and acidic residues). Residues Pro-660–Ala-670 show a composition bias toward low complexity. Residues Gly-680–Gly-689 show a composition bias toward gly residues. Positions Thr-691–Thr-700 are enriched in low complexity. Residues Gly-737–Gly-746 are compositionally biased toward gly residues. Composition is skewed to low complexity over residues Ser-754–Pro-781 and Leu-789–Pro-799. The span at Gly-800–Arg-810 shows a compositional bias: gly residues. Residues Tyr-837–Pro-882 show a composition bias toward low complexity. Positions Arg-892–Pro-903 are enriched in basic and acidic residues. The span at Ser-976–Pro-988 shows a compositional bias: pro residues.

This sequence belongs to the fibrillar collagen family. As to quaternary structure, trimers of one alpha 2(I) and two alpha 1(I) chains. Interacts (via C-terminus) with TMEM131 (via PapD-L domain); the interaction is direct and is involved in assembly and TRAPPIII ER-to-Golgi transport complex-dependent secretion of collagen. In terms of processing, prolines at the third position of the tripeptide repeating unit (G-X-Y) are hydroxylated in some or all of the chains. As to expression, expressed in bones.

Its subcellular location is the secreted. The protein resides in the extracellular space. It localises to the extracellular matrix. Its function is as follows. Type I collagen is a member of group I collagen (fibrillar forming collagen). This chain is Collagen alpha-2(I) chain, found in Choloepus hoffmanni (Hoffmann's two-fingered sloth).